A 318-amino-acid chain; its full sequence is Ubiquinol oxidase, mitochondrial (318 aa).

A mitochondrion-targeting transit peptide spans 1–46 (MTVMRGLLNGGRYGNRYIWTAISLRHPEVMEGNGLESAVMQWRRML). A helical membrane pass occupies residues 143–163 (AMMLETVAAVPGMVGGMLLHL). Residues Glu147, Glu186, and His189 each coordinate Fe cation. Residues 205-225 (LLVLAVQGVFFNSFFVLYVLS) form a helical membrane-spanning segment. Fe cation-binding residues include Glu237, Glu288, and His291.

The protein belongs to the alternative oxidase family. In terms of assembly, homodimer; disulfide-linked. Fe cation serves as cofactor.

The protein localises to the mitochondrion inner membrane. It catalyses the reaction 2 a ubiquinol + O2 = 2 a ubiquinone + 2 H2O. Its function is as follows. Catalyzes the cyanide-resistant oxidation of ubiquinol and the reduction of molecular oxygen to water, but does not translocate protons and consequently is not linked to oxidative phosphorylation. May increase respiration when the cytochrome respiratory pathway is restricted, or in response to low temperatures. The polypeptide is Ubiquinol oxidase, mitochondrial (AOMI 1) (Mangifera indica (Mango)).